A 266-amino-acid chain; its full sequence is Glucosamine-6-phosphate deaminase (266 aa).

Residue D72 is the Proton acceptor; for enolization step of the active site. The For ring-opening step role is filled by D141. H143 acts as the Proton acceptor; for ring-opening step in catalysis. The For ring-opening step role is filled by E148.

The protein belongs to the glucosamine/galactosamine-6-phosphate isomerase family. NagB subfamily. Homohexamer.

The enzyme catalyses alpha-D-glucosamine 6-phosphate + H2O = beta-D-fructose 6-phosphate + NH4(+). The protein operates within amino-sugar metabolism; N-acetylneuraminate degradation; D-fructose 6-phosphate from N-acetylneuraminate: step 5/5. Allosterically activated by N-acetylglucosamine 6-phosphate (GlcNAc6P). Its function is as follows. Catalyzes the reversible isomerization-deamination of glucosamine 6-phosphate (GlcN6P) to form fructose 6-phosphate (Fru6P) and ammonium ion. The protein is Glucosamine-6-phosphate deaminase of Aliivibrio salmonicida (strain LFI1238) (Vibrio salmonicida (strain LFI1238)).